A 255-amino-acid chain; its full sequence is 5'-nucleotidase SurE (255 aa).

Positions 8, 9, 40, and 93 each coordinate a divalent metal cation.

Belongs to the SurE nucleotidase family. A divalent metal cation serves as cofactor.

It is found in the cytoplasm. It catalyses the reaction a ribonucleoside 5'-phosphate + H2O = a ribonucleoside + phosphate. In terms of biological role, nucleotidase that shows phosphatase activity on nucleoside 5'-monophosphates. The sequence is that of 5'-nucleotidase SurE from Rhodopseudomonas palustris (strain HaA2).